A 642-amino-acid polypeptide reads, in one-letter code: MPVITLPDGSKREFAHSVSTLDVAADIGPGLAKACIAGRVNGELKDACDLIETDSDLSIITAKDEEGVEILRHSCAHLLGHAIKQLFPETKMAIGPVIDNGFYYDIDLDHKLTQEDIDALEKRMAELAKTNYAVDKRVVSWQEARDTFESRGEVYKMAILDENIPKDSTPALYHHEEYIDMCRGPHVPNMKFCQNFKLMSVAGAYWRGNSDNKMLQRVYGTAWADKKALKVHLNRLEEAAKRDHRKIGKQLDLYHMQEEAPGMVFWHNDGWSLFLELEKFIRQKLGQYTYQEVKGPLMMDRVLWERSGHWDKYSEAMFTTSSENREYAVKPMNCPGHVQIFNQGLKSYRDLPLRMAEFGCCHRNEPSGSLHGLMRVRGFTQDDAHIFCTEEQVQQEVSACIKMVYDTYETFGFNSIVVKLSTRPEKRIGDDEMWDRAEEALKQALKANDIEFEILPGEGAFYGPKIEFTLHDCLDRAWQCGTVQLDYALPGRLGATYVAEDNSRQTPVMIHRAILGSLERFLGILIEEYAGKFPAWLSPVQVVVMNITDKQSDYVDEVVNLFKEHGIRATKDLRNEKIGFKIREHTLRRVPYLLVVGDQEMENKEVAVRTREGVDLGKMQIEEFATKLKNQISLRSLNLLED.

Residues 1–61 (MPVITLPDGS…ETDSDLSIIT (61 aa)) form the TGS domain. The tract at residues 243–534 (DHRKIGKQLD…LIEEYAGKFP (292 aa)) is catalytic. Zn(2+) contacts are provided by cysteine 334, histidine 385, and histidine 511.

It belongs to the class-II aminoacyl-tRNA synthetase family. In terms of assembly, homodimer. Requires Zn(2+) as cofactor.

The protein resides in the cytoplasm. The catalysed reaction is tRNA(Thr) + L-threonine + ATP = L-threonyl-tRNA(Thr) + AMP + diphosphate + H(+). Functionally, catalyzes the attachment of threonine to tRNA(Thr) in a two-step reaction: L-threonine is first activated by ATP to form Thr-AMP and then transferred to the acceptor end of tRNA(Thr). Also edits incorrectly charged L-seryl-tRNA(Thr). The protein is Threonine--tRNA ligase of Shewanella pealeana (strain ATCC 700345 / ANG-SQ1).